The sequence spans 484 residues: Glutamate--tRNA ligase (484 aa).

The short motif at 11-21 (PSPTGYLHIGN) is the 'HIGH' region element. The 'KMSKS' region signature appears at 252 to 256 (KLSKR). Lys255 is a binding site for ATP.

Belongs to the class-I aminoacyl-tRNA synthetase family. Glutamate--tRNA ligase type 1 subfamily. Monomer.

It localises to the cytoplasm. It carries out the reaction tRNA(Glu) + L-glutamate + ATP = L-glutamyl-tRNA(Glu) + AMP + diphosphate. Catalyzes the attachment of glutamate to tRNA(Glu) in a two-step reaction: glutamate is first activated by ATP to form Glu-AMP and then transferred to the acceptor end of tRNA(Glu). The sequence is that of Glutamate--tRNA ligase from Staphylococcus epidermidis (strain ATCC 35984 / DSM 28319 / BCRC 17069 / CCUG 31568 / BM 3577 / RP62A).